Consider the following 320-residue polypeptide: Annexin A5 (320 aa).

Ala-2 bears the N-acetylalanine mark. 4 Annexin repeats span residues Phe-15–Lys-86, Pro-87–Gln-158, Ala-170–Lys-242, and Ser-246–Gly-317. Lys-29 is covalently cross-linked (Glycyl lysine isopeptide (Lys-Gly) (interchain with G-Cter in SUMO1); alternate). Lys-29 is covalently cross-linked (Glycyl lysine isopeptide (Lys-Gly) (interchain with G-Cter in SUMO2); alternate). A Phosphoserine modification is found at Ser-37. N6-acetyllysine occurs at positions 70, 76, 79, 97, and 101. At Lys-290 the chain carries N6-succinyllysine. Positions Leu-314 to Asp-320 match the [IL]-x-C-x-x-[DE] motif motif.

The protein belongs to the annexin family. In terms of assembly, monomer. Binds ATRX and EIF5B. S-nitrosylation is induced by interferon-gamma and oxidatively-modified low-densitity lipoprotein (LDL(ox)) possibly implicating the iNOS-S100A8/9 transnitrosylase complex.

Its function is as follows. This protein is an anticoagulant protein that acts as an indirect inhibitor of the thromboplastin-specific complex, which is involved in the blood coagulation cascade. This chain is Annexin A5 (ANXA5), found in Macaca fascicularis (Crab-eating macaque).